The sequence spans 363 residues: Cytochrome b (363 aa).

Transmembrane regions (helical) follow at residues 23–43, 67–89, 102–122, and 164–184; these read VGFILGILLILQILSGLLLTF, WFVRLYHSVGVSFYFFFMFIHII, SWYSGIVILILSIVIAFTGYV, and FFILHFVLPAVVLVIVLLHLY. Residues His-73 and His-87 each contribute to the heme b site. The heme b site is built by His-168 and His-182. Position 187 (His-187) interacts with a ubiquinone. A run of 4 helical transmembrane segments spans residues 210 to 230, 271 to 291, 309 to 329, and 332 to 352; these read ILFSDVKFLVIISMFIGPQVG, VFPTKVSGLVAMVVVLKLLII, RVWTTTSVPLVPALFLLGCIG, and VINLDLIIIGIYGVLLSTTFV.

The protein belongs to the cytochrome b family. The main subunits of complex b-c1 are: cytochrome b, cytochrome c1 and the Rieske protein. Requires heme b as cofactor.

It localises to the mitochondrion inner membrane. In terms of biological role, component of the ubiquinol-cytochrome c reductase complex (complex III or cytochrome b-c1 complex) that is part of the mitochondrial respiratory chain. The b-c1 complex mediates electron transfer from ubiquinol to cytochrome c. Contributes to the generation of a proton gradient across the mitochondrial membrane that is then used for ATP synthesis. The protein is Cytochrome b (MT-CYB) of Theileria parva (East coast fever infection agent).